A 109-amino-acid chain; its full sequence is Spermidine export protein MdtI (109 aa).

Transmembrane regions (helical) follow at residues 6–26 (WVHAAWLALAIVLEIVANVFL), 36–56 (IFGLLSLAAVLAAFSALSQAV), 64–84 (AYALWGGFGIAATLAAGWILF), and 88–108 (LNRKGWIGLVLLLAGMIMVKL).

Belongs to the drug/metabolite transporter (DMT) superfamily. Small multidrug resistance (SMR) (TC 2.A.7.1) family. MdtI subfamily. As to quaternary structure, forms a complex with MdtJ.

The protein localises to the cell inner membrane. Its function is as follows. Catalyzes the excretion of spermidine. The protein is Spermidine export protein MdtI of Escherichia coli O81 (strain ED1a).